We begin with the raw amino-acid sequence, 459 residues long: MLKIYNSMSREKQEFKPITPGKIGMYVCGITIYDLCHIGHGRTFVSFDMIVRYLRYLGYEVNFQRNITDVDDKIIKRAAENNESCDALTERLTAEMHKDFDALNMVRPDFEPKATLHMPEIIEMVQRLLDRGHAYVAPDGDVLFSVASYKEYGRLSGQNIDQLQAGARVEIDHNKQNPMDFVLWKMSKPGEPTWESPWGAGRPGWHIECSAMNGKHLGTHFDIHGGGSDLQFPHHENEIAQSCCAHDTPYVNYWMHTGMVMVDREKMSKSLGNFFTIRDVLKHYDAQTVRYFLLSGHYRSQLNYSEDNLKQARSALERLYTAFKDLDLTVTAAPADEYVTKFKSAMNDDFNTPEAYSVLFDMVREINRLKTTDMGAASALGVSMKQLADVLGIVSVDIETFFKGSGSDDEVAEIEALIVERNRARTEKDWAAADVARDRLNQLGVVLEDGENGTTWKKK.

C28 lines the Zn(2+) pocket. The 'HIGH' region motif lies at 30 to 40 (ITIYDLCHIGH). 3 residues coordinate Zn(2+): C209, H234, and E238. The 'KMSKS' region signature appears at 266-270 (KMSKS). ATP is bound at residue K269.

The protein belongs to the class-I aminoacyl-tRNA synthetase family. Monomer. Requires Zn(2+) as cofactor.

The protein localises to the cytoplasm. It catalyses the reaction tRNA(Cys) + L-cysteine + ATP = L-cysteinyl-tRNA(Cys) + AMP + diphosphate. The chain is Cysteine--tRNA ligase from Shewanella denitrificans (strain OS217 / ATCC BAA-1090 / DSM 15013).